The following is a 309-amino-acid chain: Diadenylate cyclase (309 aa).

Positions 144-301 (TITLYELFET…DGKIVFETDP (158 aa)) constitute a DAC domain.

Belongs to the adenylate cyclase family. DacZ subfamily. The cofactor is Mn(2+).

The catalysed reaction is 2 ATP = 3',3'-c-di-AMP + 2 diphosphate. Functionally, diadenylate cyclase that catalyzes the condensation of 2 ATP molecules into cyclic di-AMP (c-di-AMP). c-di-AMP is a second messenger for intracellular signal transduction involved in the control of important regulatory processes such as osmoregulation. The chain is Diadenylate cyclase from Methanocaldococcus jannaschii (strain ATCC 43067 / DSM 2661 / JAL-1 / JCM 10045 / NBRC 100440) (Methanococcus jannaschii).